The chain runs to 374 residues: Flap endonuclease 1 (374 aa).

The interval 1 to 105 is N-domain; that stretch reads MGVKGLNQLI…GELEKRMIRK (105 aa). Residue Asp34 coordinates Mg(2+). DNA-binding residues include Arg47 and Arg71. Residues Asp87, Glu159, Glu161, Asp180, and Asp182 each contribute to the Mg(2+) site. The segment at 123–254 is I-domain; it reads EMVRYEKRSV…VTAFKLIKEH (132 aa). Glu159 lines the DNA pocket. Gly232 and Asp234 together coordinate DNA. Asp234 lines the Mg(2+) pocket. The segment at 341-349 is interaction with PCNA; the sequence is VQGRLDGFF. The span at 354–365 shows a compositional bias: basic and acidic residues; sequence TEKRKPEQDKKT. The tract at residues 354–374 is disordered; it reads TEKRKPEQDKKTKGSKKAKKK.

It belongs to the XPG/RAD2 endonuclease family. FEN1 subfamily. In terms of assembly, interacts with PCNA. Three molecules of FEN1 bind to one PCNA trimer with each molecule binding to one PCNA monomer. PCNA stimulates the nuclease activity without altering cleavage specificity. Mg(2+) is required as a cofactor. Phosphorylated. Phosphorylation upon DNA damage induces relocalization to the nuclear plasma.

The protein localises to the nucleus. The protein resides in the nucleolus. Its subcellular location is the nucleoplasm. It localises to the mitochondrion. In terms of biological role, structure-specific nuclease with 5'-flap endonuclease and 5'-3' exonuclease activities involved in DNA replication and repair. During DNA replication, cleaves the 5'-overhanging flap structure that is generated by displacement synthesis when DNA polymerase encounters the 5'-end of a downstream Okazaki fragment. It enters the flap from the 5'-end and then tracks to cleave the flap base, leaving a nick for ligation. Also involved in the long patch base excision repair (LP-BER) pathway, by cleaving within the apurinic/apyrimidinic (AP) site-terminated flap. Acts as a genome stabilization factor that prevents flaps from equilibrating into structures that lead to duplications and deletions. Also possesses 5'-3' exonuclease activity on nicked or gapped double-stranded DNA, and exhibits RNase H activity. Also involved in replication and repair of rDNA and in repairing mitochondrial DNA. The protein is Flap endonuclease 1 of Meyerozyma guilliermondii (strain ATCC 6260 / CBS 566 / DSM 6381 / JCM 1539 / NBRC 10279 / NRRL Y-324) (Yeast).